The primary structure comprises 667 residues: Threonine--tRNA ligase (667 aa).

The TGS domain maps to 1-64 (MSEAISLTFP…TDGKIEIVTR (64 aa)). Residues 245 to 553 (DHRRLGREMD…LIENFAGHMP (309 aa)) form a catalytic region. Residues cysteine 347, histidine 398, and histidine 530 each contribute to the Zn(2+) site.

Belongs to the class-II aminoacyl-tRNA synthetase family. In terms of assembly, homodimer. Requires Zn(2+) as cofactor.

Its subcellular location is the cytoplasm. It carries out the reaction tRNA(Thr) + L-threonine + ATP = L-threonyl-tRNA(Thr) + AMP + diphosphate + H(+). In terms of biological role, catalyzes the attachment of threonine to tRNA(Thr) in a two-step reaction: L-threonine is first activated by ATP to form Thr-AMP and then transferred to the acceptor end of tRNA(Thr). Also edits incorrectly charged L-seryl-tRNA(Thr). This is Threonine--tRNA ligase from Agrobacterium fabrum (strain C58 / ATCC 33970) (Agrobacterium tumefaciens (strain C58)).